The following is a 423-amino-acid chain: Lysosomal acid phosphatase (423 aa).

The N-terminal stretch at 1 to 30 (MAGRQSGWSQAALLQFLLGMCLMVMPPIQA) is a signal peptide. Residues 31 to 380 (RSLRFVTLLY…QLASDTADTE (350 aa)) lie on the Lumenal side of the membrane. Histidine 42 serves as the catalytic Nucleophile. N-linked (GlcNAc...) asparagine glycosylation is found at asparagine 92, asparagine 133, asparagine 167, asparagine 177, asparagine 191, asparagine 197, and asparagine 267. Disulfide bonds link cysteine 159-cysteine 370, cysteine 212-cysteine 310, and cysteine 345-cysteine 349. The active-site Proton donor is the aspartate 287. 2 N-linked (GlcNAc...) asparagine glycosylation sites follow: asparagine 322 and asparagine 331. A helical transmembrane segment spans residues 381–401 (VIVALAVCGSILFLLIVLLLT). Residues 402–423 (VLFRMQAQPPGYHHVADREDHA) lie on the Cytoplasmic side of the membrane.

It belongs to the histidine acid phosphatase family. The membrane-bound form is converted to the soluble form by sequential proteolytic processing. First, the C-terminal cytoplasmic tail is removed. Cleavage by a lysosomal protease releases the soluble form in the lysosome lumen.

The protein localises to the lysosome membrane. It localises to the lysosome lumen. It carries out the reaction a phosphate monoester + H2O = an alcohol + phosphate. The sequence is that of Lysosomal acid phosphatase (Acp2) from Rattus norvegicus (Rat).